Reading from the N-terminus, the 127-residue chain is Holo-[acyl-carrier-protein] synthase (127 aa).

Mg(2+)-binding residues include D8 and E57.

The protein belongs to the P-Pant transferase superfamily. AcpS family. Mg(2+) serves as cofactor.

The protein localises to the cytoplasm. It carries out the reaction apo-[ACP] + CoA = holo-[ACP] + adenosine 3',5'-bisphosphate + H(+). Functionally, transfers the 4'-phosphopantetheine moiety from coenzyme A to a Ser of acyl-carrier-protein. The protein is Holo-[acyl-carrier-protein] synthase of Ruthia magnifica subsp. Calyptogena magnifica.